The sequence spans 142 residues: Hemoglobin subunit alpha-A (142 aa).

Residues 2 to 142 form the Globin domain; sequence VLSAADKTNV…VGTVLTAKYR (141 aa). His-59 contributes to the O2 binding site. Heme b is bound at residue His-88.

The protein belongs to the globin family. As to quaternary structure, heterotetramer of two alpha chains and two beta chains. As to expression, red blood cells.

Its function is as follows. Involved in oxygen transport from the lung to the various peripheral tissues. This Coturnix japonica (Japanese quail) protein is Hemoglobin subunit alpha-A (HBAA).